A 631-amino-acid chain; its full sequence is Phosphomethylpyrimidine synthase (631 aa).

Residues Asn-239, Met-268, Tyr-297, His-333, 353-355, 394-397, and Glu-433 contribute to the substrate site; these read SRG and DGLR. His-437 contacts Zn(2+). Residue Tyr-460 participates in substrate binding. Position 501 (His-501) interacts with Zn(2+). Residues Cys-581, Cys-584, and Cys-589 each contribute to the [4Fe-4S] cluster site.

It belongs to the ThiC family. Homodimer. It depends on [4Fe-4S] cluster as a cofactor.

It catalyses the reaction 5-amino-1-(5-phospho-beta-D-ribosyl)imidazole + S-adenosyl-L-methionine = 4-amino-2-methyl-5-(phosphooxymethyl)pyrimidine + CO + 5'-deoxyadenosine + formate + L-methionine + 3 H(+). It functions in the pathway cofactor biosynthesis; thiamine diphosphate biosynthesis. In terms of biological role, catalyzes the synthesis of the hydroxymethylpyrimidine phosphate (HMP-P) moiety of thiamine from aminoimidazole ribotide (AIR) in a radical S-adenosyl-L-methionine (SAM)-dependent reaction. The protein is Phosphomethylpyrimidine synthase of Shigella sonnei (strain Ss046).